We begin with the raw amino-acid sequence, 1447 residues long: Adhesion G protein-coupled receptor L3 (1447 aa).

The N-terminal stretch at 1–19 (MWPSQLLIFMMLLAPIIHA) is a signal peptide. The Extracellular segment spans residues 20–862 (FSRAPIPMAV…VKHSDAVHDL (843 aa)). Residues 35 to 124 (SCESYPIELR…KYLEVQYECV (90 aa)) form the SUEL-type lectin domain. 5 cysteine pairs are disulfide-bonded: Cys36-Cys66, Cys45-Cys123, Cys78-Cys110, Cys91-Cys97, and Cys135-Cys317. Residue Asn93 is glycosylated (N-linked (GlcNAc...) asparagine). Residues 134–393 (LCPGLLKGVY…VVKYSLDFGP (260 aa)) form the Olfactomedin-like domain. The tract at residues 249–279 (YHDTSPYRWGGKSDIDLAVDENGLWVIYATE) is interaction with FLRT3. Ca(2+) is bound by residues Asp264, Asn312, Ala313, and Val367. The tract at residues 426 to 473 (DISTTGPLGMGSTTTSTTLRTTTLSPGRSTTPSVSGRRNRSTSTPSPA) is disordered. Residues 428–458 (STTGPLGMGSTTTSTTLRTTTLSPGRSTTPS) show a composition bias toward low complexity. 6 N-linked (GlcNAc...) asparagine glycosylation sites follow: Asn464, Asn549, Asn746, Asn759, Asn804, and Asn830. One can recognise a GAIN-B domain in the interval 675-854 (DIVRENTDNI…AVLMAHVEVK (180 aa)). 2 disulfide bridges follow: Cys805–Cys836 and Cys824–Cys838. The interval 805-854 (CSFWSYSKRTMTGYWSTQGCRLLTTNKTHTTCSCNHLTNFAVLMAHVEVK) is GPS. The tract at residues 842–855 (TNFAVLMAHVEVKH) is stachel. Residues 863–888 (LLDVITWVGILLSLVCLLICIFTFCF) traverse the membrane as a helical segment. Residues 889–896 (FRGLQSDR) are Cytoplasmic-facing. Residues 897–918 (NTIHKNLCISLFVAELLFLIGI) form a helical membrane-spanning segment. The Extracellular segment spans residues 919 to 926 (NRTDQPIA). A helical transmembrane segment spans residues 927 to 950 (CAVFAALLHFFFLAAFTWMFLEGV). Residues Cys927 and Cys999 are joined by a disulfide bond. Residues 951 to 967 (QLYIMLVEVFESEHSRR) lie on the Cytoplasmic side of the membrane. Residues 968–990 (KYFYLVGYGMPALIVAVSAAVDY) form a helical membrane-spanning segment. Topologically, residues 991-1005 (RSYGTDKVCWLRLDT) are extracellular. The chain crosses the membrane as a helical span at residues 1006–1027 (YFIWSFIGPATLIIMLNVIFLG). Residues 1028–1053 (IALYKMFHHTAILKPESGCLDNIKSW) are Cytoplasmic-facing. A helical membrane pass occupies residues 1054–1073 (VIGAIALLCLLGLTWAFGLM). The Extracellular portion of the chain corresponds to 1074–1078 (YINES). Residue Asn1076 is glycosylated (N-linked (GlcNAc...) asparagine). Residues 1079-1104 (TVIMAYLFTIFNSLQGMFIFIFHCVL) form a helical membrane-spanning segment. The Cytoplasmic portion of the chain corresponds to 1105 to 1447 (QKKVRKEYGK…KGPAHLVTSL (343 aa)). The segment at 1123–1147 (GKSTESSIGSGKTSGSRTPGRYSTG) is disordered. Residue Ser1164 is modified to Phosphoserine. The tract at residues 1423 to 1447 (IVPPNKDGTPPEGSSKGPAHLVTSL) is disordered. A PDZ-binding motif is present at residues 1442 to 1447 (HLVTSL).

It belongs to the G-protein coupled receptor 2 family. LN-TM7 subfamily. As to quaternary structure, heterodimer of 2 chains generated by proteolytic processing; the large extracellular N-terminal fragment and the membrane-bound C-terminal fragment predominantly remain associated and non-covalently linked. Interacts (via olfactomedin-like domain) with FLRT1 (via extracellular domain). Interacts (via olfactomedin-like domain) with FLRT2 (via extracellular domain). Interacts (via olfactomedin-like domain) with FLRT3 (via extracellular domain); the interaction is direct. Interacts (via extracellular domain) with TENM1. Interacts (via extracellular domain) with TENM2. Interacts (via extracellular domain) with TENM3. Identified in a complex with FLRT3 and UNC5B; does not interact with UNC5B by itself. Identified in a complex with FLRT3 and UNC5D; does not interact with UNC5D by itself. Interacts (via PDZ-binding motif) with SHANK3. Interacts (via PDZ-binding motif) with DLG4. Autoproteolytically processed at the GPS region of the GAIN-B domain; this cleavage modulates receptor activity.

It localises to the cell membrane. The protein resides in the postsynaptic cell membrane. The protein localises to the cell projection. Its subcellular location is the axon. It is found in the cell junction. With respect to regulation, forms a heterodimer of 2 chains generated by proteolytic processing that remain associated through non-covalent interactions mediated by the GAIN-B domain. In the inactivated receptor, the Stachel sequence (also named stalk) is embedded in the GAIN-B domain, where it adopts a beta-strand conformation. On activation, the Stachel moves into the 7 transmembrane region and adopts a twisted hook-shaped configuration that forms contacts within the receptor, leading to coupling of a G-alpha protein, which activates signaling. The cleaved GAIN-B and N-terminal domains can then dissociate from the rest of the receptor. Its function is as follows. Orphan adhesion G-protein coupled receptor (aGPCR), which mediates synapse specificity. Ligand binding causes a conformation change that triggers signaling via guanine nucleotide-binding proteins (G proteins) and modulates the activity of downstream effectors. ADGRL3 is coupled with different classes of G alpha proteins, such as G(12)/G(13), G(s), G(i) or G(q), depending on the context. Coupling to G(12)/G(13) G proteins, which mediates the activation Rho small GTPases is the most efficient. Following G-protein coupled receptor activation, associates with cell adhesion molecules that are expressed at the surface of adjacent cells to direct synapse specificity. Specifically mediates the establishment of Schaffer-collateral synapses formed by CA3-region axons on CA1-region pyramidal neurons in the hippocampus. Localizes to postsynaptic spines in excitatory synapses in the S.oriens and S.radiatum and interacts with presynaptic cell adhesion molecules FLRT3 and TENM2, promoting synapse formation. Plays a role in the development of glutamatergic synapses in the cortex. Important in determining the connectivity rates between the principal neurons in the cortex. Orphan adhesion G-protein coupled receptor (aGPCR), which mediates synapse specificity. Ligand binding causes a conformation change that triggers signaling via guanine nucleotide-binding proteins (G proteins) and modulates the activity of downstream effectors, such as adenylate cyclase. Isoform 1 is specifically coupled to G(s) G proteins and mediates activation of adenylate cyclase activity. Following G-protein coupled receptor activation, undergoes liquid-liquid phase transition, associates with (1) cell adhesion molecules that are expressed at the surface of adjacent cells, as well as (2) PDZ-containing proteins, such as SHANK3 and DLG4, in the cytoplasm to direct synapse formation. The protein is Adhesion G protein-coupled receptor L3 of Homo sapiens (Human).